A 515-amino-acid chain; its full sequence is Alpha-1B adrenergic receptor (515 aa).

The Extracellular portion of the chain corresponds to 1 to 45; that stretch reads MNPDLDTGHNTSAPAHWGELKDDNFTGPNQTSSNSTLPQLDVTRA. Residues N10, N24, and N34 are each glycosylated (N-linked (GlcNAc...) asparagine). A helical transmembrane segment spans residues 46 to 70; sequence ISVGLVLGAFILFAIVGNILVILSV. Topologically, residues 71 to 83 are cytoplasmic; it reads ACNRHLRTPTNYF. The helical transmembrane segment at 84–105 threads the bilayer; that stretch reads IVNLAIADLLLSFTVLPFSATL. Residues 106 to 115 are Extracellular-facing; that stretch reads EVLGYWVLGR. A helical membrane pass occupies residues 116-141; sequence IFCDIWAAVDVLCCTASILSLCAISI. Cysteines 118 and 195 form a disulfide. Residues 142–161 are Cytoplasmic-facing; sequence DRYIGVRYSLQYPTLVTRRK. Residues 162 to 182 form a helical membrane-spanning segment; that stretch reads AILALLSVWVLSTVISIGPLL. The Extracellular portion of the chain corresponds to 183-201; that stretch reads GWKEPAPNDDKECGVTEEP. A helical membrane pass occupies residues 202–224; that stretch reads FYALFSSLGSFYIPLAVILVMYC. Over 225 to 295 the chain is Cytoplasmic; it reads RVYIVAKRTT…FSREKKAAKT (71 aa). Phosphothreonine is present on T264. Residues 296–319 form a helical membrane-spanning segment; it reads LGIVVGMFILCWLPFFIALPLGSL. The Extracellular segment spans residues 320–326; it reads FSTLKPP. A helical membrane pass occupies residues 327-351; it reads DAVFKVVFWLGYFNSCLNPIIYPCS. Residues 352–515 are Cytoplasmic-facing; it reads SKEFKRAFMR…SNMPLAPGHF (164 aa). The S-palmitoyl cysteine moiety is linked to residue C365. The Nuclear localization signal signature appears at 368–378; the sequence is RGGRRRRRRRR. 2 disordered regions span residues 392 to 430 and 474 to 515; these read GGSLERSQSRKDSLDDSGSCMSGTQRTLPSASPSPGYLG and LGDP…PGHF. Polar residues-rich tracts occupy residues 410–424 and 484–498; these read SCMSGTQRTLPSASP and GDTSNGGCDTTTDLA.

The protein belongs to the G-protein coupled receptor 1 family. Adrenergic receptor subfamily. ADRA1B sub-subfamily. As to quaternary structure, homo- and heterooligomer. Heterooligomerizes with ADRA1B homooligomers in cardiac myocytes. Interacts with CAVIN4.

The protein resides in the nucleus membrane. The protein localises to the cell membrane. It localises to the cytoplasm. It is found in the membrane. Its subcellular location is the caveola. This alpha-adrenergic receptor mediates its action by association with G proteins that activate a phosphatidylinositol-calcium second messenger system. Its effect is mediated by G(q) and G(11) proteins. Nuclear ADRA1A-ADRA1B heterooligomers regulate phenylephrine (PE)-stimulated ERK signaling in cardiac myocytes. This is Alpha-1B adrenergic receptor (Adra1b) from Rattus norvegicus (Rat).